A 624-amino-acid chain; its full sequence is MADVPADLAAVWPRVLEQLLGEGQQGIEPKDKQWIERCQPLALVADTALLAVPNEWGKRVLEGRLAPLISETLTRECGRPIRIAITVDDSAGEPPSPPAPPMHQSHQSQQGHRYPAQQRDDAPRGDAYDGYGHRPSDDGMPTRRPAYPDYQQQRPEPGAWPRTQEDLSWQQPRHGGYQDREQPSGEPYRESESYRERENEQYREQAPEQWRQPYGTGRPQQPQHDYRSGPPEHQGYEQQRPDRQDQGQGPRQGGHGPGRTGGSVPGPMGAQPAPAPGPGEPHARLNPKYLFDTFVIGASNRFAHAAAVAVAEAPAKAYNPLFIYGESGLGKTHLLHAIGHYARSLYPGTRVRYVSSEEFTNEFINSIRDGKGDTFRKRYRDVDILLVDDIQFLASKESTQEEFFHTFNTLHNANKQIVLSSDRPPKQLVTLEDRLRNRFEWGLTTDVQPPELETRIAILRKKAVQEQLNAPPEVLEFIASRISRNIRELEGALIRVTAFASLNRQPVDLGLTEIVLKDLIPGGEESAPEITAPAIMAATADYFGLTVDDLCGSSRTRVLVTARQIAMYLCRELTDLSLPKIGAQFGGRDHTTVMHADRKIRALMAERRSIYNQVTELTNRIKNG.

The interval 1–99 is domain I, interacts with DnaA modulators; that stretch reads MADVPADLAA…SAGEPPSPPA (99 aa). Residues 88-284 form a disordered region; the sequence is DDSAGEPPSP…APGPGEPHAR (197 aa). The domain II stretch occupies residues 100–283; the sequence is PPMHQSHQSQ…PAPGPGEPHA (184 aa). A compositionally biased stretch (low complexity) spans 102–112; that stretch reads MHQSHQSQQGH. Composition is skewed to basic and acidic residues over residues 118–141 and 176–206; these read QRDD…DGMP and GYQD…REQA. Residues 250–264 show a composition bias toward gly residues; that stretch reads PRQGGHGPGRTGGSV. The interval 284 to 500 is domain III, AAA+ region; the sequence is RLNPKYLFDT…GALIRVTAFA (217 aa). The ATP site is built by Gly328, Gly330, Lys331, and Thr332. The segment at 501–624 is domain IV, binds dsDNA; sequence SLNRQPVDLG…TELTNRIKNG (124 aa).

The protein belongs to the DnaA family. As to quaternary structure, oligomerizes as a right-handed, spiral filament on DNA at oriC.

It localises to the cytoplasm. Plays an essential role in the initiation and regulation of chromosomal replication. ATP-DnaA binds to the origin of replication (oriC) to initiate formation of the DNA replication initiation complex once per cell cycle. Binds the DnaA box (a 9 base pair repeat at the origin) and separates the double-stranded (ds)DNA. Forms a right-handed helical filament on oriC DNA; dsDNA binds to the exterior of the filament while single-stranded (ss)DNA is stabiized in the filament's interior. The ATP-DnaA-oriC complex binds and stabilizes one strand of the AT-rich DNA unwinding element (DUE), permitting loading of DNA polymerase. After initiation quickly degrades to an ADP-DnaA complex that is not apt for DNA replication. Binds acidic phospholipids. In terms of biological role, the DnaA box consensus is 5'-(T/C)(T/C)(G/AC)TCCACA-3'. In Streptomyces anulatus (Streptomyces chrysomallus), this protein is Chromosomal replication initiator protein DnaA.